The primary structure comprises 384 residues: MVIKLKNKKNDYSKLERKLYMYIVAIVVVAIVFVLYIRSMIRGKLGDWILSILENKYDLNHLDAMKLYQYSIRNNIDIFIYVAIVISILILCRVMLSKFAKYFDEINTGIDVLIQNEDKQIELSAEMDVMEQKLNTLKRTLEKREQDAKLAEQRKNDVVMYLAHDIKTPLTSIIGYLSLLDEAPDMPVDQKAKYVHITLDKAYRLEQLIDEFFEITRYNLQTITLTKTHIDLYYMLVQMTDEFYPQLSAHGKQAVIHAPEDLTVSGDPDKLARVFNNILKNAAAYSEDNSIIDITAGLSGDVVSIEFKNTGSIPKDKLAAIFEKFYRLDNARSSDTGGAGLGLAIAKEIIVQHGGQIYAESNDNYTTFRVELPAMPDLVDKRRS.

2 consecutive transmembrane segments (helical) span residues 21 to 41 and 76 to 96; these read MYIVAIVVVAIVFVLYIRSMI and IDIFIYVAIVISILILCRVML. In terms of domain architecture, Histidine kinase spans 161–376; sequence YLAHDIKTPL…TFRVELPAMP (216 aa). Residue H164 is modified to Phosphohistidine; by autocatalysis. The involved in low-affinity ATP-binding. Exhibits higher affinity for ATP than GTP stretch occupies residues 221-384; that stretch reads QTITLTKTHI…MPDLVDKRRS (164 aa).

In terms of processing, autophosphorylated.

The protein localises to the membrane. It catalyses the reaction ATP + protein L-histidine = ADP + protein N-phospho-L-histidine.. Phosphorylation of VanR inhibited by EDTA. In terms of biological role, member of the two-component regulatory system VanS/VanR. Functions as a sensor protein kinase which is autophosphorylated at a histidine residue in response to environmental stimuli, such as glycopeptide antibiotics. VanS transfers its phosphate group to transcriptional regulatory protein VanR, thereby modulating expression of target genes. Binds directly to, and autophosphorylation activity is enhanced by, the glycopeptides vancomycin and teicoplanin, in vitro. However it has also been reported that autophosphorylation, phosphate transfer to VanR and dephosphorylation of phospho-VanR are all unaffected by the presence of vancomycin, in vitro. In the absence of vancomycin, negatively regulates VanR-mediated activation of vanS, vanH, vanA and vanX, probably as a result of dephosphorylating phospho-VanR. May inhibit promoter-specific DNA binding by VanR. Involved in conferring vancomycin resistance. The sequence is that of Sensor protein VanS from Enterococcus faecium (Streptococcus faecium).